Consider the following 1050-residue polypeptide: Probable efflux pump membrane transporter TtgB (1050 aa).

Helical transmembrane passes span 10-30 (IFAW…ILKL), 339-359 (GVIH…YLFL), 370-390 (MTVP…GFSI), 393-413 (LTMF…IVVV), 440-460 (GALV…AFFG), 472-492 (ITIV…TPAL), 539-559 (VPFL…FARI), 871-891 (MPAL…ALYE), 893-913 (WSIP…ALIA), 923-943 (VYFL…AILI), 972-992 (IIMT…ASGA), and 1004-1024 (VIGG…LFFV).

This sequence belongs to the resistance-nodulation-cell division (RND) (TC 2.A.6) family.

It is found in the cell inner membrane. Its function is as follows. Probable membrane transporter component of the TtgABC efflux pump with unknown specificity. The chain is Probable efflux pump membrane transporter TtgB (ttgB) from Pseudomonas putida (strain ATCC 47054 / DSM 6125 / CFBP 8728 / NCIMB 11950 / KT2440).